The sequence spans 302 residues: Arginase (302 aa).

Mn(2+) is bound by residues His-103, Asp-126, His-128, and Asp-130. Residues 128 to 132 (HGDLN), 139 to 141 (SGN), and Asp-180 contribute to the substrate site. The Mn(2+) site is built by Asp-229 and Asp-231. Substrate is bound by residues Thr-243 and Glu-274.

It belongs to the arginase family. Requires Mn(2+) as cofactor.

It carries out the reaction L-arginine + H2O = urea + L-ornithine. The protein operates within nitrogen metabolism; urea cycle; L-ornithine and urea from L-arginine: step 1/1. The sequence is that of Arginase (arg) from Staphylococcus aureus (strain MRSA252).